An 85-amino-acid chain; its full sequence is Putative membrane protein insertion efficiency factor (85 aa).

Belongs to the UPF0161 family.

It is found in the cell inner membrane. Could be involved in insertion of integral membrane proteins into the membrane. The polypeptide is Putative membrane protein insertion efficiency factor (Tolumonas auensis (strain DSM 9187 / NBRC 110442 / TA 4)).